The sequence spans 217 residues: MEFLVEDLGLVPYGEAWAYQKRVHREVVAGNRPPTLLLLEHPRVITLGRKATGENLLFPESWYRENGFELYWVERGGDVTYHGPGQLVGYPIFPVGREVRRFLRQIEEAIVRVAAGYGISAYPTPGYAGVWVGEDKLCAIGVAVKEGVSFHGFALNVNTDLNDFTVIVPCGLKGKGVTSLEKLLGRKVPMEEAKARVVAAFAEVFGLRPVEGSVHEA.

The 180-residue stretch at 30–209 (GNRPPTLLLL…AFAEVFGLRP (180 aa)) folds into the BPL/LPL catalytic domain. Residues 75-82 (RGGDVTYH), 139-141 (AIG), and 152-154 (GFA) each bind substrate. Cys-170 acts as the Acyl-thioester intermediate in catalysis.

It belongs to the LipB family.

It localises to the cytoplasm. It carries out the reaction octanoyl-[ACP] + L-lysyl-[protein] = N(6)-octanoyl-L-lysyl-[protein] + holo-[ACP] + H(+). The protein operates within protein modification; protein lipoylation via endogenous pathway; protein N(6)-(lipoyl)lysine from octanoyl-[acyl-carrier-protein]: step 1/2. Catalyzes the transfer of endogenously produced octanoic acid from octanoyl-acyl-carrier-protein onto the lipoyl domains of lipoate-dependent enzymes. Lipoyl-ACP can also act as a substrate although octanoyl-ACP is likely to be the physiological substrate. The polypeptide is Octanoyltransferase (Thermus thermophilus (strain ATCC 27634 / DSM 579 / HB8)).